The sequence spans 304 residues: Malate dehydrogenase (304 aa).

Residues 8-14 and Asp34 contribute to the NAD(+) site; that span reads GAAGTVG. Positions 83 and 89 each coordinate substrate. NAD(+) contacts are provided by residues Asn96 and 119–121; that span reads TSN. The substrate site is built by Asn121 and Arg152. The Proton acceptor role is filled by His176.

It belongs to the LDH/MDH superfamily.

It catalyses the reaction (S)-malate + NAD(+) = oxaloacetate + NADH + H(+). Its function is as follows. Catalyzes the reversible oxidation of malate to oxaloacetate. The sequence is that of Malate dehydrogenase (mdh) from Natronomonas pharaonis (strain ATCC 35678 / DSM 2160 / CIP 103997 / JCM 8858 / NBRC 14720 / NCIMB 2260 / Gabara) (Halobacterium pharaonis).